The primary structure comprises 401 residues: Methionyl-tRNA formyltransferase, mitochondrial (401 aa).

A mitochondrion-targeting transit peptide spans methionine 1–proline 26. (6R)-10-formyltetrahydrofolate contacts are provided by residues tyrosine 18–serine 20 and valine 66–serine 70.

It belongs to the Fmt family. Phosphorylated by GCN2 in response to nutrient deprivation. Phosphorylation mediates retention of FMT1 in the cytoplasm.

It is found in the mitochondrion. It localises to the mitochondrion matrix. Its subcellular location is the cytoplasm. It carries out the reaction L-methionyl-tRNA(fMet) + (6R)-10-formyltetrahydrofolate = N-formyl-L-methionyl-tRNA(fMet) + (6S)-5,6,7,8-tetrahydrofolate + H(+). Formylates methionyl-tRNA in mitochondria and the cytoplasm. Responsible for the formylation of the 8 N-terminally formylated (Nt-formylated) mitochondrial matrix proteins that are encoded by mitochondrial DNA. Nt-formylated proteins in the cytoplasm are strongly up-regulated in stationary phase or upon starvation for specific amino acids (His or Lys) and are targeted for degradation by a PSH1 E3 ubiquitin ligase-mediated fMet/N-end rule pathway. Increased Nt-formylation of cytosolic proteins appears to be important for adaptation to these stresses. Stationary phase-degraded Nt-formylated proteins include histone H3-like centromeric protein CSE4, Mediator complex subunit 3 (PGD1) and small ribosomal subunit protein uS8-A (RPS22A). This is Methionyl-tRNA formyltransferase, mitochondrial (FMT1) from Saccharomyces cerevisiae (strain ATCC 204508 / S288c) (Baker's yeast).